A 274-amino-acid chain; its full sequence is MEFVKYQGLGNDFILIDCVKIKIDGLNALGKKLCDRHFGIGADGLIAVFPSASADYKIRIINSDGTEPEMCGNGIRCAMRFVFDYIKPQRKLTFETLAGPIKTELLAENLVKVDMGAPKLTAAQIPLNISDSDGRAVDIPVKLEGGKIKGTGVSMGNPHFVIFVEDIKKTDVAKTGKEVENNTAFPQKTNVEFVQVITPSRLCMKVWERGVGITLACGTGACASLVAGVLNNKTERLALVELDGGQLTVEWPDDGASVFMTGPATEVFSGVFKE.

Substrate contacts are provided by asparagine 11 and asparagine 62. Cysteine 71 (proton donor) is an active-site residue. Residues 72–73 (GN), asparagine 157, asparagine 190, and 208–209 (ER) contribute to the substrate site. Catalysis depends on cysteine 217, which acts as the Proton acceptor. A substrate-binding site is contributed by 218-219 (GT).

Belongs to the diaminopimelate epimerase family. As to quaternary structure, homodimer.

The protein resides in the cytoplasm. The enzyme catalyses (2S,6S)-2,6-diaminopimelate = meso-2,6-diaminopimelate. It participates in amino-acid biosynthesis; L-lysine biosynthesis via DAP pathway; DL-2,6-diaminopimelate from LL-2,6-diaminopimelate: step 1/1. In terms of biological role, catalyzes the stereoinversion of LL-2,6-diaminopimelate (L,L-DAP) to meso-diaminopimelate (meso-DAP), a precursor of L-lysine and an essential component of the bacterial peptidoglycan. The protein is Diaminopimelate epimerase of Elusimicrobium minutum (strain Pei191).